A 655-amino-acid chain; its full sequence is MPVGGLLPLFSSPGGGGLGSGLGGGLGGGRKGSGPAAFRLTEKFVLLLVFSAFITLCFGAIFFLPDSSKLLSGVLFHSNPALQPPAEHKPGLGARAEDAAEGRVRHREEGAPGDPGAGLEDNLARIRENHERALREAKETLQKLPEEIQRDILLEKEKVAQDQLRDKDLFRGLPKVDFLPPVGVENREPADATIREKRAKIKEMMTHAWNNYKRYAWGLNELKPISKEGHSSSLFGNIKGATIVDALDTLFIMGMKTEFQEAKSWIKKYLDFNVNAEVSVFEVNIRFVGGLLSAYYLSGEEIFRKKAVELGVKLLPAFHTPSGIPWALLNMKSGIGRNWPWASGGSSILAEFGTLHLEFMHLSHLSGDPVFAEKVMKIRTVLNKLDKPEGLYPNYLNPSSGQWGQHHVSVGGLGDSFYEYLLKAWLMSDKTDLEAKKMYFDAVQAIETHLIRKSSGGLTYIAEWKGGLLEHKMGHLTCFAGGMFALGADGAPEARAQHYLELGAEIARTCHESYNRTYVKLGPEAFRFDGGVEAIATRQNEKYYILRPEVIETYMYMWRLTHDPKYRTWAWEAVEALESHCRVNGGYSGLRDVYIARESYDDVQQSFFLAETLKYLYLIFSDDDLLPLEHWIFNTEAHPFPILREQKKEIDGKEK.

Topologically, residues 1–43 (MPVGGLLPLFSSPGGGGLGSGLGGGLGGGRKGSGPAAFRLTEK) are cytoplasmic. Residues 44–64 (FVLLLVFSAFITLCFGAIFFL) traverse the membrane as a helical; Signal-anchor for type II membrane protein segment. The Lumenal portion of the chain corresponds to 65–655 (PDSSKLLSGV…QKKEIDGKEK (591 aa)). An intrachain disulfide couples Cys-478 to Cys-510. N-linked (GlcNAc...) asparagine glycosylation occurs at Asn-515. Glu-524 serves as the catalytic Proton donor. Ca(2+) is bound at residue Thr-635.

This sequence belongs to the glycosyl hydrolase 47 family. Requires Ca(2+) as cofactor. Post-translationally, N-linked glycan at Asn-515 consists of Man(6)-GlcNAc(2).

The protein resides in the golgi apparatus membrane. It catalyses the reaction N(4)-(alpha-D-Man-(1-&gt;2)-alpha-D-Man-(1-&gt;2)-alpha-D-Man-(1-&gt;3)-[alpha-D-Man-(1-&gt;2)-alpha-D-Man-(1-&gt;3)-[alpha-D-Man-(1-&gt;2)-alpha-D-Man-(1-&gt;6)]-alpha-D-Man-(1-&gt;6)]-beta-D-Man-(1-&gt;4)-beta-D-GlcNAc-(1-&gt;4)-beta-D-GlcNAc)-L-asparaginyl-[protein] (N-glucan mannose isomer 9A1,2,3B1,2,3) + 4 H2O = N(4)-(alpha-D-Man-(1-&gt;3)-[alpha-D-Man-(1-&gt;3)-[alpha-D-Man-(1-&gt;6)]-alpha-D-Man-(1-&gt;6)]-beta-D-Man-(1-&gt;4)-beta-D-GlcNAc-(1-&gt;4)-beta-D-GlcNAc)-L-asparaginyl-[protein] (N-glucan mannose isomer 5A1,2) + 4 beta-D-mannose. The catalysed reaction is N(4)-(alpha-D-Man-(1-&gt;2)-alpha-D-Man-(1-&gt;2)-alpha-D-Man-(1-&gt;3)-[alpha-D-Man-(1-&gt;3)-[alpha-D-Man-(1-&gt;2)-alpha-D-Man-(1-&gt;6)]-alpha-D-Man-(1-&gt;6)]-beta-D-Man-(1-&gt;4)-beta-D-GlcNAc-(1-&gt;4)-beta-D-GlcNAc)-L-asparaginyl-[protein] (N-glucan mannose isomer 8A1,2,3B1,3) + 3 H2O = N(4)-(alpha-D-Man-(1-&gt;3)-[alpha-D-Man-(1-&gt;3)-[alpha-D-Man-(1-&gt;6)]-alpha-D-Man-(1-&gt;6)]-beta-D-Man-(1-&gt;4)-beta-D-GlcNAc-(1-&gt;4)-beta-D-GlcNAc)-L-asparaginyl-[protein] (N-glucan mannose isomer 5A1,2) + 3 beta-D-mannose. The protein operates within protein modification; protein glycosylation. Its activity is regulated as follows. Inhibited by both 1-deoxymannojirimycin and kifunensine. Functionally, involved in the maturation of Asn-linked oligosaccharides. Progressively trim alpha-1,2-linked mannose residues from Man(9)GlcNAc(2) to produce Man(5)GlcNAc(2). The protein is Mannosyl-oligosaccharide 1,2-alpha-mannosidase IA (Man1a1) of Mus musculus (Mouse).